Here is a 956-residue protein sequence, read N- to C-terminus: Plasma membrane ATPase 1 (956 aa).

The Cytoplasmic segment spans residues 1–65 (MAEKPEVLDA…EKKESKFLKF (65 aa)). Residues 66-85 (LGFMWNPLSWVMEAAAIMAI) traverse the membrane as a helical segment. Over 86-97 (ALANGGGKPPDW) the chain is Extracellular. A helical transmembrane segment spans residues 98-118 (QDFVGIITLLIINSTISFIEE). The Cytoplasmic segment spans residues 119–247 (NNAGNAAAAL…GHFQKVLTAI (129 aa)). The helical transmembrane segment at 248–268 (GNFCICSIAVGMIIEIIVMYP) threads the bilayer. The Extracellular portion of the chain corresponds to 269–277 (IQHRKYRPG). A helical transmembrane segment spans residues 278-295 (IDNLLVLLIGGIPIAMPT). Residues 296–646 (VLSVTMAIGS…LTSRAIFQRM (351 aa)) are Cytoplasmic-facing. The active-site 4-aspartylphosphate intermediate is Asp-333. Mg(2+) contacts are provided by Asp-592 and Asp-596. Residues 647 to 666 (KNYTIYAVSITIRIVLGFML) form a helical membrane-spanning segment. Residues 667-674 (LALIWKFD) lie on the Extracellular side of the membrane. The chain crosses the membrane as a helical span at residues 675-697 (FPPFMVLIIAILNDGTIMTISKD). Topologically, residues 698 to 713 (RVKPSPLPDSWKLAEI) are cytoplasmic. A helical transmembrane segment spans residues 714–734 (FTTGVVLGGYLAMMTVIFFWA). Residues 735 to 759 (AYKTNFFPRIFGVSTLEKTATDDFR) are Extracellular-facing. Residues 760-780 (KLASAIYLQVSTISQALIFVT) traverse the membrane as a helical segment. Topologically, residues 781–792 (RSRSWSFVERPG) are cytoplasmic. The chain crosses the membrane as a helical span at residues 793-813 (LLLVFAFFVAQLVATLIAVYA). Residues 814-821 (NWSFAAIE) are Extracellular-facing. A helical membrane pass occupies residues 822-842 (GIGWGWAGVIWLYNIVTYIPL). Over 843 to 956 (DLIKFLIRYA…IETIQQSYTV (114 aa)) the chain is Cytoplasmic.

This sequence belongs to the cation transport ATPase (P-type) (TC 3.A.3) family. Type IIIA subfamily. In terms of assembly, possibly exists as a homodimer or a homotrimer.

The protein localises to the cell membrane. It carries out the reaction ATP + H2O + H(+)(in) = ADP + phosphate + 2 H(+)(out). Functionally, the plasma membrane ATPase of plants and fungi is a hydrogen ion pump. The proton gradient it generates drives the active transport of nutrients by H(+)-symport. The resulting external acidification and/or internal alkinization may mediate growth responses. The polypeptide is Plasma membrane ATPase 1 (LHA1) (Solanum lycopersicum (Tomato)).